The primary structure comprises 95 residues: UPF0213 protein YPA_2977 (95 aa).

The region spanning 4–79 (SLWHLYLLRT…KQLSKQQKEK (76 aa)) is the GIY-YIG domain.

Belongs to the UPF0213 family.

The chain is UPF0213 protein YPA_2977 from Yersinia pestis bv. Antiqua (strain Antiqua).